Consider the following 911-residue polypeptide: DNA mismatch repair protein MutS (911 aa).

Basic and acidic residues predominate over residues 1 to 10; sequence MDNKTDHKND. The disordered stretch occupies residues 1 to 24; it reads MDNKTDHKNDLNSQPVPSSAPHKE. An ATP-binding site is contributed by 662 to 669; it reads GPNMGGKS.

Belongs to the DNA mismatch repair MutS family.

In terms of biological role, this protein is involved in the repair of mismatches in DNA. It is possible that it carries out the mismatch recognition step. This protein has a weak ATPase activity. The polypeptide is DNA mismatch repair protein MutS (Bartonella quintana (strain Toulouse) (Rochalimaea quintana)).